The chain runs to 191 residues: Ribosome maturation factor RimM (191 aa).

The PRC barrel domain occupies Glu-114–Tyr-191.

Belongs to the RimM family. In terms of assembly, binds ribosomal protein uS19.

It localises to the cytoplasm. Functionally, an accessory protein needed during the final step in the assembly of 30S ribosomal subunit, possibly for assembly of the head region. Essential for efficient processing of 16S rRNA. May be needed both before and after RbfA during the maturation of 16S rRNA. It has affinity for free ribosomal 30S subunits but not for 70S ribosomes. The polypeptide is Ribosome maturation factor RimM (Paracidovorax citrulli (strain AAC00-1) (Acidovorax citrulli)).